A 490-amino-acid polypeptide reads, in one-letter code: (21S)-21-acetyl-1-hydroxy-apo-melianone synthase CYP88A164 (490 aa).

Residues 4-24 (DLLWLILAIVVGTYVVLFGFL) form a helical membrane-spanning segment. Cys438 contacts heme.

This sequence belongs to the cytochrome P450 family. It depends on heme as a cofactor. As to expression, mainly expressed in petioles and, to a lower extent, in roots.

The protein localises to the membrane. It catalyses the reaction (21S)-21-acetoxyl-apo-melianone + reduced [NADPH--hemoprotein reductase] + O2 = (21S)-21-acetyl-1-hydroxy-apo-melianone + oxidized [NADPH--hemoprotein reductase] + H2O + H(+). Its pathway is secondary metabolite biosynthesis; terpenoid biosynthesis. Functionally, monooxygenase involved in the biosynthesis of limonoids triterpene natural products such as azadirachtin, an antifeedant widely used as bioinsecticide, and possessing many medicinal applications including anti-tumoral, anti-malarial, anti-rheumatic, antibacterial, anti-inflammatory, anti-pyretic and diuretic effects. Catalyzes the conversion of (21S)-21-acetoxyl-apo-melianone to (21S)-21-acetyl-1-hydroxy-apo-melianone. The protein is (21S)-21-acetyl-1-hydroxy-apo-melianone synthase CYP88A164 of Melia azedarach (Chinaberry tree).